A 228-amino-acid polypeptide reads, in one-letter code: Probable C4-dicarboxylate response regulator DctR (228 aa).

A Response regulatory domain is found at 7–123 (TVLLIEDDPM…RMKQALEQYR (117 aa)). Residue D58 is modified to 4-aspartylphosphate. Positions 180 to 199 (AEEVADGVGIARVTARRYLE) form a DNA-binding region, H-T-H motif.

Phosphorylated by DctS.

Its subcellular location is the cytoplasm. In terms of biological role, member of the two-component regulatory system DctS/DctR. Essential for expression of DctP. The protein is Probable C4-dicarboxylate response regulator DctR (dctR) of Priestia megaterium (Bacillus megaterium).